Here is a 115-residue protein sequence, read N- to C-terminus: Large ribosomal subunit protein bL35m (115 aa).

Belongs to the bacterial ribosomal protein bL35 family.

It is found in the mitochondrion. In Saccharomyces cerevisiae (strain YJM789) (Baker's yeast), this protein is Large ribosomal subunit protein bL35m.